A 305-amino-acid polypeptide reads, in one-letter code: Large ribosomal subunit protein uL2m (305 aa).

The transit peptide at 1–60 (MALCALTRALRSLNLAPPTVAAPAPSLFPAAQMMNNGLLQQPSALMLLPCRPVLTSVALN) directs the protein to the mitochondrion. The disordered stretch occupies residues 264 to 283 (RWLGKRPNSGRWHRKGGWAG). Positions 274–283 (RWHRKGGWAG) are enriched in basic residues.

It belongs to the universal ribosomal protein uL2 family. In terms of assembly, component of the mitochondrial large ribosomal subunit (mt-LSU). Mature mammalian 55S mitochondrial ribosomes consist of a small (28S) and a large (39S) subunit. The 28S small subunit contains a 12S ribosomal RNA (12S mt-rRNA) and 30 different proteins. The 39S large subunit contains a 16S rRNA (16S mt-rRNA), a copy of mitochondrial valine transfer RNA (mt-tRNA(Val)), which plays an integral structural role, and 52 different proteins.

Its subcellular location is the mitochondrion. This chain is Large ribosomal subunit protein uL2m (MRPL2), found in Homo sapiens (Human).